We begin with the raw amino-acid sequence, 175 residues long: Protein LpfE (175 aa).

An N-terminal signal peptide occupies residues 1-20; that stretch reads MKNLHALMPACLLLTASAMA.

Belongs to the fimbrial protein family.

It is found in the fimbrium. The polypeptide is Protein LpfE (lpfE) (Salmonella typhimurium (strain LT2 / SGSC1412 / ATCC 700720)).